Here is a 279-residue protein sequence, read N- to C-terminus: Thymidylate synthase (279 aa).

141–142 (RR) lines the dUMP pocket. Cys161 functions as the Nucleophile in the catalytic mechanism. Residues 181-184 (RSND), Asn192, and 222-224 (HIY) contribute to the dUMP site. Asp184 serves as a coordination point for (6R)-5,10-methylene-5,6,7,8-tetrahydrofolate. Ala278 lines the (6R)-5,10-methylene-5,6,7,8-tetrahydrofolate pocket.

This sequence belongs to the thymidylate synthase family. Bacterial-type ThyA subfamily. In terms of assembly, homodimer.

It is found in the cytoplasm. The enzyme catalyses dUMP + (6R)-5,10-methylene-5,6,7,8-tetrahydrofolate = 7,8-dihydrofolate + dTMP. It functions in the pathway pyrimidine metabolism; dTTP biosynthesis. Functionally, catalyzes the reductive methylation of 2'-deoxyuridine-5'-monophosphate (dUMP) to 2'-deoxythymidine-5'-monophosphate (dTMP) while utilizing 5,10-methylenetetrahydrofolate (mTHF) as the methyl donor and reductant in the reaction, yielding dihydrofolate (DHF) as a by-product. This enzymatic reaction provides an intracellular de novo source of dTMP, an essential precursor for DNA biosynthesis. The polypeptide is Thymidylate synthase (Bacillus licheniformis (strain ATCC 14580 / DSM 13 / JCM 2505 / CCUG 7422 / NBRC 12200 / NCIMB 9375 / NCTC 10341 / NRRL NRS-1264 / Gibson 46)).